Here is a 500-residue protein sequence, read N- to C-terminus: Hexokinase-3 (500 aa).

A helical transmembrane segment spans residues 4-24; the sequence is VGLGVAVGCAAVTCAIAAALV. The region spanning 35–487 is the Hexokinase domain; that stretch reads RRAVALLREF…SGVGAALLAA (453 aa). The hexokinase small subdomain stretch occupies residues 90-222; the sequence is SGSEEGVYYS…GLNVRVTALV (133 aa). Residues glycine 104, threonine 105, and asparagine 106 each contribute to the ADP site. Residues threonine 188, lysine 189, asparagine 223, and aspartate 224 each coordinate D-glucose. Residues 223–476 are hexokinase large subdomain; it reads NDTVGTLALG…RNVTLRVTED (254 aa). An ADP-binding site is contributed by serine 247. Residues asparagine 250, glutamate 278, and glutamate 309 each coordinate D-glucose. Glycine 441 is a binding site for ADP.

Belongs to the hexokinase family. In terms of tissue distribution, expressed in roots, leaves, flowers, immature seeds and seed coat. Expressed in young shoots, tiller buds, endosperm seven days after fertilization, and interconnecting tissues such as pulvini and nodes.

It localises to the mitochondrion outer membrane. The enzyme catalyses a D-hexose + ATP = a D-hexose 6-phosphate + ADP + H(+). It catalyses the reaction D-fructose + ATP = D-fructose 6-phosphate + ADP + H(+). It carries out the reaction D-glucose + ATP = D-glucose 6-phosphate + ADP + H(+). Its pathway is carbohydrate metabolism; hexose metabolism. The protein operates within carbohydrate degradation; glycolysis; D-glyceraldehyde 3-phosphate and glycerone phosphate from D-glucose: step 1/4. Fructose and glucose phosphorylating enzyme. Involved in the regulation of cell expansion in spikelet hulls, grain size, and gibberellin biosynthesis and homeostasis. In Oryza sativa subsp. japonica (Rice), this protein is Hexokinase-3.